A 967-amino-acid polypeptide reads, in one-letter code: Dolichyl-phosphooligosaccharide-protein glycotransferase 1 (967 aa).

Residues 1 to 21 (MVKTQIKEKKKDEKVTIPLPG) are Cytoplasmic-facing. The chain crosses the membrane as a helical span at residues 22-42 (KIKTVLAFLVVLAFAAYGFYI). Over 43–112 (RHLTAGKYFS…ISIFGYNELE (70 aa)) the chain is Extracellular. Residues 53–55 (DPD) carry the DXD motif 1 motif. A Mn(2+)-binding site is contributed by Asp55. Residues 113-133 (AFLLWPPFVGFLSVIGVYLLG) traverse the membrane as a helical segment. The Cytoplasmic segment spans residues 134-135 (RK). The chain crosses the membrane as a helical span at residues 136 to 156 (VLNEWAGMWGAIILSVLTANF). At 157 to 165 (SRTFSGNAR) the chain is on the extracellular side. Positions 165 and 167 each coordinate Mn(2+). The DXD motif 2 signature appears at 165–167 (RGD). The helical transmembrane segment at 166 to 186 (GDGPFMMLFTFSAVLMLYYLT) threads the bilayer. Residues 187 to 193 (EENKNKK) lie on the Cytoplasmic side of the membrane. A helical membrane pass occupies residues 194–214 (IIWGTLFVLLAGISTAAWNGS). A topological domain (extracellular) is located at residue Pro215. A helical membrane pass occupies residues 216 to 236 (FGLMVLLGFASFQTIILFIFG). Residues 237 to 247 (KINELREFIKE) lie on the Cytoplasmic side of the membrane. The chain crosses the membrane as a helical span at residues 248 to 268 (YYPAYLGILAISYLLTIPGIG). Lys269 is a topological domain (extracellular). A helical membrane pass occupies residues 270–290 (IGGFVRFAFEVFLGLVFLAIV). Residues 291 to 306 (MLYGGKYLNYSDKKHR) lie on the Cytoplasmic side of the membrane. A helical transmembrane segment spans residues 307–327 (FAVVAVIVIAGFAGAYIYVGP). Residues 328-360 (KLFTLMGGAYQSTQVYETVQELAKTDWGDVKVY) lie on the Extracellular side of the membrane. A TIXE motif motif is present at residues 345–348 (TVQE). Residues 361–381 (YGVEKPNGIVFFLGLVGAMIV) form a helical membrane-spanning segment. Over 382–396 (TARYLYKLFKDGRRP) the chain is Cytoplasmic. A helical transmembrane segment spans residues 397–417 (HEELFAITFYVMSIYLLWTAA). A topological domain (extracellular) is located at residue Arg418. Arg418 contributes to the a glycophospholipid binding site. The chain crosses the membrane as a helical span at residues 419-439 (FLFLASYAIALMSGVFAGYVL). The Cytoplasmic portion of the chain corresponds to 440–453 (ETVEKMKESIPIKA). A helical membrane pass occupies residues 454–474 (ALGGVIAIMLLLIPLTHGPLL). Residues 475–967 (AQSAKSMRTT…LEVSASAPHH (493 aa)) lie on the Extracellular side of the membrane. Residues 511–513 (WWD) are interacts with target acceptor peptide in protein substrate. The short motif at 511–515 (WWDYG) is the WWDYG motif element. Tyr516 is an a glycophospholipid binding site. The DK motif signature appears at 571 to 578 (DWAKFNAI).

This sequence belongs to the STT3 family. It depends on Mn(2+) as a cofactor. Mg(2+) is required as a cofactor.

The protein localises to the cell membrane. It catalyses the reaction an archaeal dolichyl phosphooligosaccharide + [protein]-L-asparagine = an archaeal dolichyl phosphate + a glycoprotein with the oligosaccharide chain attached by N-beta-D-glycosyl linkage to a protein L-asparagine.. The protein operates within protein modification; protein glycosylation. Oligosaccharyl transferase (OST) that catalyzes the initial transfer of a defined glycan (ManNAcXyl(2)GlcAMan(2)GalNAc in P.furiosus) from the lipid carrier dolichol-monophosphate to an asparagine residue within an Asn-X-Ser/Thr consensus motif in nascent polypeptide chains, the first step in protein N-glycosylation. The polypeptide is Dolichyl-phosphooligosaccharide-protein glycotransferase 1 (aglB1) (Pyrococcus furiosus (strain ATCC 43587 / DSM 3638 / JCM 8422 / Vc1)).